Here is a 299-residue protein sequence, read N- to C-terminus: Oxygen-dependent coproporphyrinogen-III oxidase (299 aa).

Serine 92 lines the substrate pocket. 2 residues coordinate a divalent metal cation: histidine 96 and histidine 106. The active-site Proton donor is histidine 106. 108–110 (NVR) is a binding site for substrate. Residues histidine 145 and histidine 175 each contribute to the a divalent metal cation site. The tract at residues 240 to 275 (YVEFNLVWDRGTLFGLQTGGRTESILMSMPPLVRWE) is important for dimerization. A substrate-binding site is contributed by 258 to 260 (GGR).

This sequence belongs to the aerobic coproporphyrinogen-III oxidase family. As to quaternary structure, homodimer. The cofactor is a divalent metal cation.

Its subcellular location is the cytoplasm. It catalyses the reaction coproporphyrinogen III + O2 + 2 H(+) = protoporphyrinogen IX + 2 CO2 + 2 H2O. It functions in the pathway porphyrin-containing compound metabolism; protoporphyrin-IX biosynthesis; protoporphyrinogen-IX from coproporphyrinogen-III (O2 route): step 1/1. Involved in the heme biosynthesis. Catalyzes the aerobic oxidative decarboxylation of propionate groups of rings A and B of coproporphyrinogen-III to yield the vinyl groups in protoporphyrinogen-IX. The protein is Oxygen-dependent coproporphyrinogen-III oxidase of Salmonella schwarzengrund (strain CVM19633).